A 179-amino-acid polypeptide reads, in one-letter code: Large ribosomal subunit protein uL5 (179 aa).

Belongs to the universal ribosomal protein uL5 family. In terms of assembly, part of the 50S ribosomal subunit; part of the 5S rRNA/L5/L18/L25 subcomplex. Contacts the 5S rRNA and the P site tRNA. Forms a bridge to the 30S subunit in the 70S ribosome.

Its function is as follows. This is one of the proteins that bind and probably mediate the attachment of the 5S RNA into the large ribosomal subunit, where it forms part of the central protuberance. In the 70S ribosome it contacts protein S13 of the 30S subunit (bridge B1b), connecting the 2 subunits; this bridge is implicated in subunit movement. Contacts the P site tRNA; the 5S rRNA and some of its associated proteins might help stabilize positioning of ribosome-bound tRNAs. This Aeromonas salmonicida (strain A449) protein is Large ribosomal subunit protein uL5.